Consider the following 515-residue polypeptide: Integrator complex subunit 14 (515 aa).

One can recognise a VWFA domain in the interval 2–204 (PTVVVMDVSL…KNVQSMFGKL (203 aa)). 3 residues coordinate Mg(2+): Ser10, Ser12, and Thr86. The residue at position 418 (Lys418) is an N6-acetyllysine.

This sequence belongs to the Integrator subunit 14 family. Component of the Integrator complex, composed of core subunits INTS1, INTS2, INTS3, INTS4, INTS5, INTS6, INTS7, INTS8, INTS9/RC74, INTS10, INTS11/CPSF3L, INTS12, INTS13, INTS14 and INTS15. The core complex associates with protein phosphatase 2A subunits PPP2CA and PPP2R1A, to form the Integrator-PP2A (INTAC) complex. INTS14 is part of the tail subcomplex, composed of INTS10, INTS13, INTS14 and INTS15.

The protein localises to the nucleus. In terms of biological role, component of the integrator complex, a multiprotein complex that terminates RNA polymerase II (Pol II) transcription in the promoter-proximal region of genes. The integrator complex provides a quality checkpoint during transcription elongation by driving premature transcription termination of transcripts that are unfavorably configured for transcriptional elongation: the complex terminates transcription by (1) catalyzing dephosphorylation of the C-terminal domain (CTD) of Pol II subunit POLR2A/RPB1 and SUPT5H/SPT5, (2) degrading the exiting nascent RNA transcript via endonuclease activity and (3) promoting the release of Pol II from bound DNA. The integrator complex is also involved in terminating the synthesis of non-coding Pol II transcripts, such as enhancer RNAs (eRNAs), small nuclear RNAs (snRNAs), telomerase RNAs and long non-coding RNAs (lncRNAs). Within the integrator complex, INTS14 is part of the integrator tail module that acts as a platform for the recruitment of transcription factors at promoters. In Rattus norvegicus (Rat), this protein is Integrator complex subunit 14.